The sequence spans 638 residues: Keratin, type II cytoskeletal 2 oral (638 aa).

A head region spans residues Met1–Gln182. Omega-N-methylarginine is present on residues Arg85 and Arg110. The interval Glu183–Leu218 is coil 1A. Positions Glu183 to Met496 constitute an IF rod domain. The interval Gln219 to Tyr237 is linker 1. A coil 1B region spans residues Ile238–Met329. Residues Gln330–Ile353 form a linker 12 region. The tract at residues Ile354–Glu492 is coil 2. Residues Glu493 to Lys638 form a tail region. The disordered stretch occupies residues Ser532 to Lys638. Residues Gly540 to Tyr549 show a composition bias toward low complexity. A compositionally biased stretch (gly residues) spans Gly550–Ser572. A compositionally biased stretch (low complexity) spans Ser573–Ser583. Position 584 is an omega-N-methylarginine (Arg584). The segment covering Ser590 to Ser608 has biased composition (low complexity). A compositionally biased stretch (gly residues) spans Gly609–Ser620. The segment covering Ser626–Lys638 has biased composition (low complexity).

The protein belongs to the intermediate filament family. In terms of assembly, heterotetramer of two type I and two type II keratins.

Its function is as follows. Probably contributes to terminal cornification. This Homo sapiens (Human) protein is Keratin, type II cytoskeletal 2 oral (KRT76).